The chain runs to 612 residues: Protein lin-61 (612 aa).

MBT repeat units follow at residues tyrosine 143–isoleucine 249, asparagine 263–leucine 380, asparagine 381–proline 501, and phenylalanine 508–proline 607.

As to quaternary structure, interacts preferentially with histone H3 that is dimethylated or trimethylated at 'Lys-9'.

It is found in the nucleus. Its subcellular location is the chromosome. Synthetic multivulva class B (synMuvB) protein required to repress the induction of vulval development by Ras signaling. Unlike other synMuv proteins it does not associate with the multiprotein DRM complex and the NuRD-like complex. Interaction with methylated histone H3 is essential for vulva development. It has a role in maintaining genome stability. The polypeptide is Protein lin-61 (lin-61) (Caenorhabditis elegans).